Here is a 283-residue protein sequence, read N- to C-terminus: Large ribosomal subunit protein uL4 (283 aa).

The protein belongs to the universal ribosomal protein uL4 family. In terms of assembly, part of the 50S ribosomal subunit.

In terms of biological role, one of the primary rRNA binding proteins, this protein initially binds near the 5'-end of the 23S rRNA. It is important during the early stages of 50S assembly. It makes multiple contacts with different domains of the 23S rRNA in the assembled 50S subunit and ribosome. Its function is as follows. Forms part of the polypeptide exit tunnel. This is Large ribosomal subunit protein uL4 from Pyrobaculum aerophilum (strain ATCC 51768 / DSM 7523 / JCM 9630 / CIP 104966 / NBRC 100827 / IM2).